Reading from the N-terminus, the 184-residue chain is UPF0398 protein BALH_1408 (184 aa).

This sequence belongs to the UPF0398 family.

The polypeptide is UPF0398 protein BALH_1408 (Bacillus thuringiensis (strain Al Hakam)).